We begin with the raw amino-acid sequence, 351 residues long: Fe(3+) ions import ATP-binding protein FbpC (351 aa).

The ABC transporter domain maps to 7 to 241; that stretch reads LTVKNLNKFF…PNHLETAKFM (235 aa). 39-46 contributes to the ATP binding site; sequence GASGCGKT.

Belongs to the ABC transporter superfamily. Fe(3+) ion importer (TC 3.A.1.10) family. As to quaternary structure, the complex is composed of two ATP-binding proteins (FbpC), two transmembrane proteins (FbpB) and a solute-binding protein (FbpA).

The protein resides in the cell inner membrane. The catalysed reaction is Fe(3+)(out) + ATP + H2O = Fe(3+)(in) + ADP + phosphate + H(+). In terms of biological role, part of the ABC transporter complex FbpABC involved in Fe(3+) ions import. Responsible for energy coupling to the transport system. The chain is Fe(3+) ions import ATP-binding protein FbpC from Haemophilus influenzae (strain 86-028NP).